Consider the following 78-residue polypeptide: Exodeoxyribonuclease 7 small subunit (78 aa).

The protein belongs to the XseB family. As to quaternary structure, heterooligomer composed of large and small subunits.

Its subcellular location is the cytoplasm. It carries out the reaction Exonucleolytic cleavage in either 5'- to 3'- or 3'- to 5'-direction to yield nucleoside 5'-phosphates.. Functionally, bidirectionally degrades single-stranded DNA into large acid-insoluble oligonucleotides, which are then degraded further into small acid-soluble oligonucleotides. The protein is Exodeoxyribonuclease 7 small subunit of Desulfitobacterium hafniense (strain Y51).